A 154-amino-acid polypeptide reads, in one-letter code: Ribosome maturation factor RimP (154 aa).

Belongs to the RimP family.

Its subcellular location is the cytoplasm. Its function is as follows. Required for maturation of 30S ribosomal subunits. This is Ribosome maturation factor RimP from Clostridium novyi (strain NT).